The chain runs to 122 residues: UPF0145 protein Bmul_3577/BMULJ_04940 (122 aa).

Belongs to the UPF0145 family.

This chain is UPF0145 protein Bmul_3577/BMULJ_04940, found in Burkholderia multivorans (strain ATCC 17616 / 249).